A 715-amino-acid polypeptide reads, in one-letter code: Lactococcin-A transport/processing ATP-binding protein LcnC (715 aa).

Residues 11-138 (QVDEMDCGCA…SEWTGISLFL (128 aa)) form the Peptidase C39 domain. Cys-17 is an active-site residue. The next 6 helical transmembrane spans lie at 167 to 187 (VILN…LGSY), 197 to 217 (IPNA…LTYI), 237 to 257 (LAID…MSFF), 282 to 302 (TILS…ILGL), 307 to 327 (LFLL…IFTP), and 396 to 416 (AIIQ…LVIS). The ABC transmembrane type-1 domain maps to 168–450 (ILNIVIASFI…IINLQTKLQK (283 aa)). The ABC transporter domain maps to 482-715 (LNMSDISYQY…NGFYEQLYHN (234 aa)). Residue 515–522 (GMSGSGKS) participates in ATP binding.

It belongs to the ABC transporter superfamily. Bacteriocin (lactococcin) exporter (TC 3.A.1.112.3) family.

It is found in the cell membrane. Involved in the export process of the bacteriocin lactococcin A. This chain is Lactococcin-A transport/processing ATP-binding protein LcnC (lcnC), found in Lactococcus lactis subsp. lactis (Streptococcus lactis).